Reading from the N-terminus, the 149-residue chain is Arginine repressor (149 aa).

This sequence belongs to the ArgR family.

It localises to the cytoplasm. It functions in the pathway amino-acid biosynthesis; L-arginine biosynthesis [regulation]. In terms of biological role, regulates arginine biosynthesis genes. The chain is Arginine repressor from Bacillus pumilus (strain SAFR-032).